The following is a 428-amino-acid chain: Proteinase-activated receptor 1 (428 aa).

Residues 1–21 form the signal peptide; that stretch reads MGPQRLLLVAAGLSLCGPLLS. Positions 22-41 are cleaved as a propeptide — removed for receptor activation; the sequence is SRVPVRQPESEMTDATVNPR. The Extracellular portion of the chain corresponds to 42 to 105; that stretch reads SFFLRNPGEN…SGYLTSPWLR (64 aa). N65 and N78 each carry an N-linked (GlcNAc...) asparagine glycan. Residues 106-131 traverse the membrane as a helical segment; sequence LFIPSVYTFVFVVSLPLNILAIAVFV. At 132 to 140 the chain is on the cytoplasmic side; that stretch reads LKMKVKKPA. A helical transmembrane segment spans residues 141–160; sequence VVYMLHLAMADVLFVSVLPL. The Extracellular portion of the chain corresponds to 161–179; sequence KISYYFSGSDWQFGSGMCR. C178 and C257 are disulfide-bonded. A helical membrane pass occupies residues 180-201; that stretch reads FATAAFYCNMYASIMLMTVISI. Residues 202–221 lie on the Cytoplasmic side of the membrane; sequence DRFLAVVYPIQSLSWRTLGR. A helical membrane pass occupies residues 222–242; sequence ANFTCLVIWVMAIMGVVPLLL. At 243 to 271 the chain is on the extracellular side; that stretch reads KEQTTRVPGLNITTCHDVLNETLLQGFYS. N-linked (GlcNAc...) asparagine glycans are attached at residues N253 and N262. The helical transmembrane segment at 272–291 threads the bilayer; the sequence is YYFSAFSAVFFLVPLIISTI. The Cytoplasmic segment spans residues 292–314; sequence CYMSIIRCLSSSSVANRSKKSRA. The chain crosses the membrane as a helical span at residues 315-337; the sequence is LFLSAAVFCVFIVCFGPTNVLLI. Residues 338-352 lie on the Extracellular side of the membrane; sequence MHYLLLSDSPATEKA. A helical membrane pass occupies residues 353–377; it reads YFAYLLCVCVSSVSCCIDPLIYYYA. Topologically, residues 378–428 are cytoplasmic; sequence SSECQRHLYGILCCKESSDPNSYNSTGQLMPSKMDTCSSHLNNSIYKKLLA. S421 bears the Phosphoserine mark.

This sequence belongs to the G-protein coupled receptor 1 family. Proteolytic cleavage by thrombin generates a new N-terminus that functions as a tethered ligand. Also proteolytically cleaved by cathepsin CTSG. In terms of processing, phosphorylated in the C-terminal tail; probably mediating desensitization prior to the uncoupling and internalization of the receptor.

The protein resides in the cell membrane. Functionally, high affinity receptor that binds the activated thrombin, leading to calcium release from intracellular stores. The thrombin-activated receptor signaling pathway is mediated through PTX-insensitive G proteins, activation of phospholipase C resulting in the production of 1D-myo-inositol 1,4,5-trisphosphate (InsP3) which binds to InsP3 receptors causing calcium release from the stores. In astrocytes, the calcium released into the cytosol allows the Ca(2+)-dependent release of L-glutamate into the synaptic cleft through BEST1, that targets the neuronal postsynaptic GRIN2A/NMDAR receptor resulting in the synaptic plasticity regulation. May play a role in platelets activation and in vascular development. Mediates up-regulation of pro-inflammatory cytokines, such as MCP-1/CCL2 and IL6, triggered by coagulation factor Xa (F10) in cardiac fibroblasts and umbilical vein endothelial cells. In Cricetulus longicaudatus (Long-tailed dwarf hamster), this protein is Proteinase-activated receptor 1.